The primary structure comprises 633 residues: Putative serine/threonine-protein kinase L232 (633 aa).

Positions 10–314 (YTIVDKLSEG…QSRKLFYEIL (305 aa)) constitute a Protein kinase domain. Residues 16-24 (LSEGTYGIV) and K39 each bind ATP. The active-site Proton acceptor is the D133.

It belongs to the protein kinase superfamily. Ser/Thr protein kinase family.

The catalysed reaction is L-seryl-[protein] + ATP = O-phospho-L-seryl-[protein] + ADP + H(+). It catalyses the reaction L-threonyl-[protein] + ATP = O-phospho-L-threonyl-[protein] + ADP + H(+). This is Putative serine/threonine-protein kinase L232 from Acanthamoeba polyphaga mimivirus (APMV).